The sequence spans 187 residues: Large ribosomal subunit protein uL5 (187 aa).

This sequence belongs to the universal ribosomal protein uL5 family. As to quaternary structure, part of the 50S ribosomal subunit; part of the 5S rRNA/L5/L18/L25 subcomplex. Contacts the 5S rRNA and the P site tRNA. Forms a bridge to the 30S subunit in the 70S ribosome.

Its function is as follows. This is one of the proteins that bind and probably mediate the attachment of the 5S RNA into the large ribosomal subunit, where it forms part of the central protuberance. In the 70S ribosome it contacts protein S13 of the 30S subunit (bridge B1b), connecting the 2 subunits; this bridge is implicated in subunit movement. Contacts the P site tRNA; the 5S rRNA and some of its associated proteins might help stabilize positioning of ribosome-bound tRNAs. This Mycobacterium bovis (strain BCG / Tokyo 172 / ATCC 35737 / TMC 1019) protein is Large ribosomal subunit protein uL5.